A 455-amino-acid polypeptide reads, in one-letter code: D-inositol 3-phosphate glycosyltransferase (455 aa).

Positions 1–25 (MSQHVSRLGGLRGRSHGHGAFGGPY) are disordered. Histidine 45 serves as a coordination point for 1D-myo-inositol 3-phosphate. UDP-N-acetyl-alpha-D-glucosamine contacts are provided by residues 51–52 (QP) and glycine 59. 1D-myo-inositol 3-phosphate contacts are provided by residues 56–61 (DAGGMN), lysine 114, tyrosine 147, threonine 171, and arginine 191. Residues arginine 266 and lysine 271 each coordinate UDP-N-acetyl-alpha-D-glucosamine. The Mg(2+) site is built by tyrosine 341, arginine 342, and alanine 344. 2 residues coordinate UDP-N-acetyl-alpha-D-glucosamine: glutamate 354 and glutamate 362. Position 368 (threonine 368) interacts with Mg(2+).

The protein belongs to the glycosyltransferase group 1 family. MshA subfamily. In terms of assembly, homodimer.

It carries out the reaction 1D-myo-inositol 3-phosphate + UDP-N-acetyl-alpha-D-glucosamine = 1D-myo-inositol 2-acetamido-2-deoxy-alpha-D-glucopyranoside 3-phosphate + UDP + H(+). Its function is as follows. Catalyzes the transfer of a N-acetyl-glucosamine moiety to 1D-myo-inositol 3-phosphate to produce 1D-myo-inositol 2-acetamido-2-deoxy-glucopyranoside 3-phosphate in the mycothiol biosynthesis pathway. This Streptomyces bingchenggensis (strain BCW-1) protein is D-inositol 3-phosphate glycosyltransferase.